Here is a 255-residue protein sequence, read N- to C-terminus: MILTIDIGNSNIDLAYFNGNKIVSHYEFETKKFSTSYEYALIIEWTLKREKLQEKDILGVALSSVVPSLTSAFIDAIKYLFGKPPFVVEPGIKTGISIETENPKEVGADLICNVVAITEEYGHCGIAVDFGTATTFSVVEKKKFLGAAIAPGVGTSAFALFEKTAKLPQVDIKAPESSLGKNTISAIQAGIVYGFAGLVDGILERQIKELKYKPVLVSTGGWAKRIVPYTKYLKEKDIDPYLTLKGLYYLYLKNL.

Position 6–13 (6–13 (DIGNSNID)) interacts with ATP. 107–110 (GADL) contributes to the substrate binding site. The Proton acceptor role is filled by D109. Residue D129 coordinates K(+). T132 is an ATP binding site. Substrate is bound at residue T183.

This sequence belongs to the type III pantothenate kinase family. As to quaternary structure, homodimer. The cofactor is NH4(+). K(+) is required as a cofactor.

The protein localises to the cytoplasm. It carries out the reaction (R)-pantothenate + ATP = (R)-4'-phosphopantothenate + ADP + H(+). Its pathway is cofactor biosynthesis; coenzyme A biosynthesis; CoA from (R)-pantothenate: step 1/5. Catalyzes the phosphorylation of pantothenate (Pan), the first step in CoA biosynthesis. The chain is Type III pantothenate kinase from Dictyoglomus turgidum (strain DSM 6724 / Z-1310).